The sequence spans 254 residues: Major prion protein (254 aa).

A signal peptide spans 1–22; the sequence is MANLSYWLLALFVATWTDVGLC. The interval 23-231 is interaction with GRB2, ERI3 and SYN1; the sequence is KKRPKPGGWN…SQAYYDGRRS (209 aa). The tract at residues 25-108 is disordered; sequence RPKPGGWNTG…WNKPNKPKTS (84 aa). 5 tandem repeats follow at residues 51–59, 60–67, 68–75, 76–83, and 84–91. Positions 51 to 91 are 5 X 8 AA tandem repeats of P-H-G-G-G-W-G-Q; that stretch reads PQGGGTWGQPHGGGWGQPHGGGWGQPHGGGWGQPHGGGWGQ. Over residues 52–95 the composition is skewed to gly residues; it reads QGGGTWGQPHGGGWGQPHGGGWGQPHGGGWGQPHGGGWGQGGGT. Residues His61, Gly62, Gly63, His69, Gly70, Gly71, His77, Gly78, Gly79, His85, Gly86, and Gly87 each contribute to the Cu(2+) site. The segment at 90-231 is prP27-30 (protease resistant core); that stretch reads GQGGGTHNQW…SQAYYDGRRS (142 aa). Cys179 and Cys214 are oxidised to a cystine. Residues Asn181 and Asn197 are each glycosylated (N-linked (GlcNAc...) asparagine). Ser231 carries GPI-anchor amidated serine lipidation. A propeptide spans 232–254 (removed in mature form); the sequence is SAVLFSSPPVILLISFLIFLIVG.

It belongs to the prion family. Monomer and homodimer. Has a tendency to aggregate into amyloid fibrils containing a cross-beta spine, formed by a steric zipper of superposed beta-strands. Soluble oligomers may represent an intermediate stage on the path to fibril formation. Copper binding may promote oligomerization. Interacts with GRB2, APP, ERI3/PRNPIP and SYN1. Mislocalized cytosolically exposed PrP interacts with MGRN1; this interaction alters MGRN1 subcellular location and causes lysosomal enlargement. Interacts with KIAA1191.

The protein resides in the cell membrane. It is found in the golgi apparatus. Its primary physiological function is unclear. Has cytoprotective activity against internal or environmental stresses. May play a role in neuronal development and synaptic plasticity. May be required for neuronal myelin sheath maintenance. May play a role in iron uptake and iron homeostasis. Soluble oligomers are toxic to cultured neuroblastoma cells and induce apoptosis (in vitro). Association with GPC1 (via its heparan sulfate chains) targets PRNP to lipid rafts. Also provides Cu(2+) or Zn(2+) for the ascorbate-mediated GPC1 deaminase degradation of its heparan sulfate side chains. The chain is Major prion protein (PRNP) from Nothocricetulus migratorius (Gray dwarf hamster).